Here is an 807-residue protein sequence, read N- to C-terminus: Potassium transporter 9 (807 aa).

Topologically, residues 1 to 59 (MAERVEASSVPEGENTIEEREVGAMWELEQKLDQPMDEEANKLNNMYREKGLSMLMLLR) are cytoplasmic. The helical transmembrane segment at 60-80 (LSFQSLGIVYGDLGTSPLYVF) threads the bilayer. At 81–96 (YNTFPDGIDDSEDVIG) the chain is on the extracellular side. The helical transmembrane segment at 97-117 (ALSLIIYSLLLIPLIKYVFIV) threads the bilayer. Residues 118–185 (CKANDNGQGG…EGKEWRKRAL (68 aa)) are Cytoplasmic-facing. Residues 186–206 (LVVVLLGTCMMIGDGILTPAI) traverse the membrane as a helical segment. Over 207 to 225 (SVLSATGGIKVNNPKMSGD) the chain is Extracellular. Residues 226–246 (IVVLVAIVILIGLFSMQHYGT) traverse the membrane as a helical segment. The Cytoplasmic portion of the chain corresponds to 247 to 248 (DK). A helical transmembrane segment spans residues 249–269 (VGWLFAPIVLIWFLFIGATGM). At 270-299 (YNICKYDTSVLKAFSPTYIYLYFKRRGRDG) the chain is on the extracellular side. Residues 300 to 320 (WISLGGILLSITGTEALYADI) traverse the membrane as a helical segment. Over 321-322 (AY) the chain is Cytoplasmic. A helical transmembrane segment spans residues 323–343 (FPLLAIQLAFTFFVFPCLLLA). At 344–369 (YCGQAAYLVIHKEHYQDAFYASIPDS) the chain is on the extracellular side. The helical transmembrane segment at 370 to 390 (VYWPMFIVATGAAIVGSQATI) threads the bilayer. Residues 391–417 (SGTYSIVKQAVAHGCFPRVKIVHTSKK) are Cytoplasmic-facing. Residues 418–438 (FLGQIYCPDINWILMLGCIAV) form a helical membrane-spanning segment. At 439–454 (TASFKKQSQIGNAYGT) the chain is on the extracellular side. The helical transmembrane segment at 455–475 (AVVLVMLVTTLLMVLIMLLVW) threads the bilayer. Over 476–481 (HCHWIL) the chain is Cytoplasmic. Residues 482–502 (VLIFTFLSFFVELSYFSAVIF) form a helical membrane-spanning segment. At 503–507 (KIDEG) the chain is on the extracellular side. A helical membrane pass occupies residues 508–528 (GWVPLIIAAISLLVMSVWHYA). The Cytoplasmic segment spans residues 529 to 807 (TVKKYEFEMH…LLNVGQVFYV (279 aa)).

The protein belongs to the HAK/KUP transporter (TC 2.A.72.3) family.

It is found in the cell membrane. In terms of biological role, putative potassium transporter. The protein is Potassium transporter 9 (POT9) of Arabidopsis thaliana (Mouse-ear cress).